A 506-amino-acid chain; its full sequence is Proline--tRNA ligase (506 aa).

This sequence belongs to the class-II aminoacyl-tRNA synthetase family. ProS type 3 subfamily. In terms of assembly, homodimer.

It localises to the cytoplasm. It catalyses the reaction tRNA(Pro) + L-proline + ATP = L-prolyl-tRNA(Pro) + AMP + diphosphate. In terms of biological role, catalyzes the attachment of proline to tRNA(Pro) in a two-step reaction: proline is first activated by ATP to form Pro-AMP and then transferred to the acceptor end of tRNA(Pro). The polypeptide is Proline--tRNA ligase (Rhodopirellula baltica (strain DSM 10527 / NCIMB 13988 / SH1)).